A 104-amino-acid polypeptide reads, in one-letter code: Seminal ribonuclease (104 aa).

4 cysteine pairs are disulfide-bonded: C12–C70, C26–C81, C44–C96, and C51–C58. Substrate is bound by residues 27–31 (KPVNT), K52, and R71.

This sequence belongs to the pancreatic ribonuclease family. Homodimer; disulfide-linked.

It is found in the secreted. The catalysed reaction is an [RNA] containing cytidine + H2O = an [RNA]-3'-cytidine-3'-phosphate + a 5'-hydroxy-ribonucleotide-3'-[RNA].. The enzyme catalyses an [RNA] containing uridine + H2O = an [RNA]-3'-uridine-3'-phosphate + a 5'-hydroxy-ribonucleotide-3'-[RNA].. In Saiga tatarica (Saiga antelope), this protein is Seminal ribonuclease (SRN).